A 120-amino-acid chain; its full sequence is NAD(P)H-quinone oxidoreductase subunit 3, chloroplastic (120 aa).

Helical transmembrane passes span 9–29, 64–84, and 88–108; these read IFWA…LISG, MFAL…PWAM, and VLGV…IVGS.

It belongs to the complex I subunit 3 family. In terms of assembly, NDH is composed of at least 16 different subunits, 5 of which are encoded in the nucleus.

The protein resides in the plastid. It localises to the chloroplast thylakoid membrane. It catalyses the reaction a plastoquinone + NADH + (n+1) H(+)(in) = a plastoquinol + NAD(+) + n H(+)(out). The catalysed reaction is a plastoquinone + NADPH + (n+1) H(+)(in) = a plastoquinol + NADP(+) + n H(+)(out). Its function is as follows. NDH shuttles electrons from NAD(P)H:plastoquinone, via FMN and iron-sulfur (Fe-S) centers, to quinones in the photosynthetic chain and possibly in a chloroplast respiratory chain. The immediate electron acceptor for the enzyme in this species is believed to be plastoquinone. Couples the redox reaction to proton translocation, and thus conserves the redox energy in a proton gradient. In Buxus microphylla (Littleleaf boxwood), this protein is NAD(P)H-quinone oxidoreductase subunit 3, chloroplastic.